A 294-amino-acid chain; its full sequence is MDGKQGGMDGSKPAGPRDFPGIRLLSNPLMGDAVSDWSPMHEAAIHGHQLSLRNLISQGWAVNIITADHVSPLHEACLGGHLSCVKILLKHGAQVNGVTADWHTPLFNACVSGSWDCVNLLLQHGASVQPESDLASPIHEAARRGHVECVNSLIAYGGNIDHKISHLGTPLYLACENQQRACVKKLLESGADVNQGKGQDSPLHAVARTASEELACLLMDFGADTQAKNAEGKRPVELVPPESPLAQLFLEREGPPSLMQLCRLRIRKCFGIQQHHKITKLVLPEDLKQFLLHL.

At Met1 the chain carries N-acetylmethionine. 6 ANK repeats span residues 35–64, 68–97, 101–130, 133–162, 166–195, and 198–227; these read SDWS…AVNI, DHVS…QVNG, DWHT…SVQP, DLAS…NIDH, HLGT…DVNQ, and GQDS…DTQA. Ser51 carries the post-translational modification Phosphoserine. An SOCS box domain is found at 240-294; sequence PPESPLAQLFLEREGPPSLMQLCRLRIRKCFGIQQHHKITKLVLPEDLKQFLLHL.

Belongs to the ankyrin SOCS box (ASB) family. Substrate-recognition component of the ECS(ASB9) complex, composed of ASB9, CUL5, ELOB, ELOC and RNF7/RBX2. As to expression, predominantly expressed in testis, kidney, and liver.

Its subcellular location is the mitochondrion. Its pathway is protein modification; protein ubiquitination. Substrate-recognition component of a cullin-5-RING E3 ubiquitin-protein ligase complex (ECS complex, also named CRL5 complex), which mediates the ubiquitination and subsequent proteasomal degradation of target proteins. The ECS(ASB9) complex catalyzes ubiquitination of creatine kinases CKB and CKMT1A. Functionally, does not interact with the Elongin BC complex, likely to be a negative regulator of isoform 1. The sequence is that of Ankyrin repeat and SOCS box protein 9 from Homo sapiens (Human).